The chain runs to 448 residues: Trk system potassium uptake protein TrkA homolog 2 (448 aa).

One can recognise an RCK N-terminal 1 domain in the interval 1 to 124 (MKAVVIGAGE…RAQVGVDIMI (124 aa)). NAD(+)-binding positions include 7-11 (GAGEV), Glu29, 70-71 (TG), and Arg101. Residues 144–225 (IDAEMFAGGK…MADLENVFGN (82 aa)) enclose the RCK C-terminal 1 domain. One can recognise an RCK N-terminal 2 domain in the interval 230 to 348 (RNRILLIGCG…FEMVGIDIAV (119 aa)). Position 232–262 (232–262 (RILLIGCGIVGFYLAKIIDKDENADLKVIEY)) interacts with NAD(+). The region spanning 368-448 (EALATIEGEK…AVRSVEKLFK (81 aa)) is the RCK C-terminal 2 domain.

Functionally, part of a potassium transport system. The chain is Trk system potassium uptake protein TrkA homolog 2 (trkA2) from Methanosarcina mazei (strain ATCC BAA-159 / DSM 3647 / Goe1 / Go1 / JCM 11833 / OCM 88) (Methanosarcina frisia).